We begin with the raw amino-acid sequence, 195 residues long: Molybdenum cofactor guanylyltransferase (195 aa).

Residues 10–12 (LAG), Lys23, Asn51, Asp69, and Asp99 each bind GTP. Mg(2+) is bound at residue Asp99.

It belongs to the MobA family. Monomer. The cofactor is Mg(2+).

It localises to the cytoplasm. The enzyme catalyses Mo-molybdopterin + GTP + H(+) = Mo-molybdopterin guanine dinucleotide + diphosphate. In terms of biological role, transfers a GMP moiety from GTP to Mo-molybdopterin (Mo-MPT) cofactor (Moco or molybdenum cofactor) to form Mo-molybdopterin guanine dinucleotide (Mo-MGD) cofactor. The polypeptide is Molybdenum cofactor guanylyltransferase (Shewanella putrefaciens (strain CN-32 / ATCC BAA-453)).